A 371-amino-acid chain; its full sequence is Barbiturase 2 (371 aa).

Residues 1 to 104 (MTRPIEVRKV…TIFAYAPEGR (104 aa)) are RU A. Substrate contacts are provided by residues Arg53 and 83-84 (SG). The segment at 112–247 (RVTVGYAMSE…AQIVVVGNAR (136 aa)) is RU B. The active site involves Lys162. Substrate is bound by residues Asn194 and 230–231 (SS). Ser230 (nucleophile) is an active-site residue. The RU C stretch occupies residues 253 to 371 (FRVGHSIMKD…PVIAIVDLEA (119 aa)). Glu303 provides a ligand contact to Mg(2+). Substrate-binding positions include Lys330 and 349 to 350 (SV). Ala352, Gln355, Gly356, Pro357, and Gly360 together coordinate Mg(2+).

It belongs to the cyclic amide hydrolase (CyAH) family. As to quaternary structure, homotetramer.

The catalysed reaction is barbiturate + H2O = 3-oxo-3-ureidopropanoate. It functions in the pathway pyrimidine metabolism; uracil degradation via oxidative pathway; malonate and urea from uracil: step 2/3. Responsible for the hydrolysis of barbituric acid (2,4,6-trihydroxy-1,3-pyrimidine), an intermediate in the oxidative catabolism of pyrimidines. Catalyzes the hydrolytic opening of the pyrimidine ring of barbituric acid to yield ureidomalonic acid. Can also use cyanuric acid as a substrate, albeit with lower efficiency. The sequence is that of Barbiturase 2 from Nocardioides sp. (strain ATCC BAA-499 / JS614).